The primary structure comprises 27 residues: Morintide mO5 (27 aa).

The region spanning 1–27 (NGLCCSQYGFCGTTSQYCSRANGCQSN) is the Chitin-binding type-1 domain. A disulfide bond links C4 and C18.

As to expression, seeds (at protein level).

In terms of biological role, chitin-binding protein which functions in defense against chitin-containing fungal pathogens. In Moringa oleifera (Horseradish tree), this protein is Morintide mO5.